We begin with the raw amino-acid sequence, 785 residues long: MTKKLTIKRKVKEPEPQNEAPDSHESSDNEEEEEDLLQAVKDPGEDSTDDEGIDQEYQTDSSEDLEFESDEEGNYLGRKGAEGSSGDDDEESAEDEEEEDDADAKKSSKNNDEEAATTSKSIKKSQEKPTSSNKVVPVVPARDPSKVEYADSDTSDEEDIRNTVGNIPMHWYDEYKHIGYDWDAKKIVKPPKGDQIDDFLRKIEDPNFWRTVKDPLTGQEVLLTDADIALIKRINSGRIPNEEHDEYAPWIEWFTSEVEKMPIKNVPDHKRSFLPSGSEKKTVSRMVHALKMGWMKTTEEVQREKQEKRGPKFYMLWETDTSREQMRRIHDPVSAPKRDLPGHAESYNPPPEYLFDEKEAKEWHKLKDEPHRRKLHFMPQKFKSLREVPAYSRYLRERFLRCLDLYLCPRAKRVKLNIDAEYLIPKLPSPRDLQPFPTVESLVYRGHTDLVRSVSVEPKGEYLVSGSDDKTVKIWEIATGRCIRTIETEDVVRCVAWCPNAKLSIIAVATGSRLLLVNPKVGDKLLVKKTDDLLAEAPVLDVIENERIKTAVQWANAEPADQEKGVRVIITHFKPIRQVTWHGRGDYLATVMPEGANRSALIHQLSKRRSQIPFSKSKGLIQCVLFHPVKPCFFVATQHNIRIYDLVKQELIKKLLTNSKWISGMSIHPKGDNLLVSTYDKKMLWFDLDLSTKPYQTMRLHRNAVRSVAFHLRYPLFASGSDDQAVIVSHGMVYNDLLQNPLIVPLKKLQTHEKREEFGVLDVNWHPVQPWVFSTGADCTIRLFT.

Residues 1–11 (MTKKLTIKRKV) are compositionally biased toward basic residues. A disordered region spans residues 1 to 160 (MTKKLTIKRK…DSDTSDEEDI (160 aa)). Composition is skewed to acidic residues over residues 45–54 (EDSTDDEGID), 61–73 (SSED…DEEG), and 85–102 (SGDD…EDDA). Residues 103–112 (DAKKSSKNND) are compositionally biased toward basic and acidic residues. A compositionally biased stretch (acidic residues) spans 150–159 (ADSDTSDEED). WD repeat units follow at residues 446 to 487 (GHTD…RTIE), 489 to 527 (EDVV…KLLV), 571 to 613 (THFK…SQIP), 616 to 654 (KSKG…LIKK), 657 to 696 (TNSK…KPYQ), 700 to 739 (LHRN…DLLQ), and 755 to 785 (REEF…RLFT).

The protein belongs to the WD repeat BOP1/ERB1 family.

It is found in the nucleus. The protein localises to the nucleolus. It localises to the nucleoplasm. Required for maturation of ribosomal RNAs and formation of the large ribosomal subunit. The polypeptide is Ribosome biogenesis protein BOP1 homolog (Drosophila persimilis (Fruit fly)).